Consider the following 383-residue polypeptide: MGDQNGNTSFAPDLNPPQDHVSLLPLNYSYGDYDIPLDDDEDVTKTQTFFAAKIVIGVALAGIMLVCGVGNFVFIAALARYKKLRNLTNLLIANLAISDFLVAIVCCPFEMDYYVVRQLSWEHGHVLCASVNYLRTVSLYVSTNALLAIAIDRYLAIVHPLKRMNYQTASFLIALVWMVSILIAIPSAYFTTETILVIVKNQEKLFCGQIWPVDQQLYYKSYFLFVFGLEFVGPVVTMTLCYARISQELWFKAVPGFQTEQIRKRLRCRRKTVLLLMGILTAYVLCWAPFYGFTIVRDFFPTLVVKEKHYLTAFYVVECIAMSNSMINTICFVTVKNNTMKYFKKMLLLHWRPSHYGSKSSADLDLKTSGVPATEEVDCIRLK.

Over 1 to 54 (MGDQNGNTSFAPDLNPPQDHVSLLPLNYSYGDYDIPLDDDEDVTKTQTFFAAKI) the chain is Extracellular. 2 N-linked (GlcNAc...) asparagine glycosylation sites follow: N7 and N27. Residues 55 to 75 (VIGVALAGIMLVCGVGNFVFI) traverse the membrane as a helical segment. The Cytoplasmic portion of the chain corresponds to 76–89 (AALARYKKLRNLTN). A helical membrane pass occupies residues 90-110 (LLIANLAISDFLVAIVCCPFE). Over 111 to 136 (MDYYVVRQLSWEHGHVLCASVNYLRT) the chain is Extracellular. A disulfide bridge links C128 with C207. The helical transmembrane segment at 137-157 (VSLYVSTNALLAIAIDRYLAI) threads the bilayer. Residues 158–170 (VHPLKRMNYQTAS) lie on the Cytoplasmic side of the membrane. Residues 171 to 191 (FLIALVWMVSILIAIPSAYFT) form a helical membrane-spanning segment. The Extracellular portion of the chain corresponds to 192 to 222 (TETILVIVKNQEKLFCGQIWPVDQQLYYKSY). A helical membrane pass occupies residues 223 to 243 (FLFVFGLEFVGPVVTMTLCYA). The Cytoplasmic portion of the chain corresponds to 244 to 272 (RISQELWFKAVPGFQTEQIRKRLRCRRKT). Residues 273–293 (VLLLMGILTAYVLCWAPFYGF) traverse the membrane as a helical segment. Residues 294-312 (TIVRDFFPTLVVKEKHYLT) are Extracellular-facing. Residues 313–333 (AFYVVECIAMSNSMINTICFV) traverse the membrane as a helical segment. The Cytoplasmic portion of the chain corresponds to 334–383 (TVKNNTMKYFKKMLLLHWRPSHYGSKSSADLDLKTSGVPATEEVDCIRLK).

It belongs to the G-protein coupled receptor 1 family. As to quaternary structure, homodimer. As to expression, abundantly expressed in the CNS and reproductive organs with the highest levels in the cerebrum, cerebellum, testis and ovary.

It is found in the cell membrane. Receptor for prokineticin 2. Exclusively coupled to the G(q) subclass of heteromeric G proteins. Activation leads to mobilization of calcium, stimulation of phosphoinositide turnover and activation of p44/p42 mitogen-activated protein kinase. This Rattus norvegicus (Rat) protein is Prokineticin receptor 2 (Prokr2).